The primary structure comprises 522 residues: Peptide chain release factor 3 (522 aa).

One can recognise a tr-type G domain in the interval Lys-9–Gln-276. Residues Ser-18–Thr-25, Asp-86–His-90, and Asn-140–Asp-143 each bind GTP.

Belongs to the TRAFAC class translation factor GTPase superfamily. Classic translation factor GTPase family. PrfC subfamily.

The protein resides in the cytoplasm. Functionally, increases the formation of ribosomal termination complexes and stimulates activities of RF-1 and RF-2. It binds guanine nucleotides and has strong preference for UGA stop codons. It may interact directly with the ribosome. The stimulation of RF-1 and RF-2 is significantly reduced by GTP and GDP, but not by GMP. This is Peptide chain release factor 3 from Lactobacillus gasseri (strain ATCC 33323 / DSM 20243 / BCRC 14619 / CIP 102991 / JCM 1131 / KCTC 3163 / NCIMB 11718 / NCTC 13722 / AM63).